A 653-amino-acid polypeptide reads, in one-letter code: Translation factor GUF1, mitochondrial (653 aa).

In terms of domain architecture, tr-type G spans Glu56 to Asn236. Residues Ala65–Ser72, Asp129–His133, and Asn183–Asp186 contribute to the GTP site.

The protein belongs to the TRAFAC class translation factor GTPase superfamily. Classic translation factor GTPase family. LepA subfamily.

Its subcellular location is the mitochondrion inner membrane. The enzyme catalyses GTP + H2O = GDP + phosphate + H(+). Its function is as follows. Promotes mitochondrial protein synthesis. May act as a fidelity factor of the translation reaction, by catalyzing a one-codon backward translocation of tRNAs on improperly translocated ribosomes. Binds to mitochondrial ribosomes in a GTP-dependent manner. This Candida tropicalis (strain ATCC MYA-3404 / T1) (Yeast) protein is Translation factor GUF1, mitochondrial.